The chain runs to 89 residues: Acylphosphatase (89 aa).

The region spanning 3–89 is the Acylphosphatase-like domain; the sequence is QKHLQVFGTV…SEDFSDFKSI (87 aa). Active-site residues include Arg-18 and Asn-36.

Belongs to the acylphosphatase family.

It carries out the reaction an acyl phosphate + H2O = a carboxylate + phosphate + H(+). The sequence is that of Acylphosphatase (acyP) from Staphylococcus haemolyticus (strain JCSC1435).